Here is a 251-residue protein sequence, read N- to C-terminus: Prolactin-7B1 (251 aa).

The first 29 residues, 1 to 29, serve as a signal peptide directing secretion; sequence MHLSLTQQCLWPLQILLVSNLLLWENVAA. N-linked (GlcNAc...) asparagine glycosylation occurs at N73. Disulfide bonds link C100–C216 and C233–C241.

It belongs to the somatotropin/prolactin family.

Its subcellular location is the secreted. In Rattus norvegicus (Rat), this protein is Prolactin-7B1 (Prl7b1).